The primary structure comprises 153 residues: Ribosome-binding factor A (153 aa).

The interval 116-153 (DAQVAEQAQGAQYAAGEDAYRTPSDEDDAEGPESAPRV) is disordered. Residues 119–132 (VAEQAQGAQYAAGE) show a composition bias toward low complexity.

It belongs to the RbfA family. In terms of assembly, monomer. Binds 30S ribosomal subunits, but not 50S ribosomal subunits or 70S ribosomes.

The protein resides in the cytoplasm. In terms of biological role, one of several proteins that assist in the late maturation steps of the functional core of the 30S ribosomal subunit. Associates with free 30S ribosomal subunits (but not with 30S subunits that are part of 70S ribosomes or polysomes). Required for efficient processing of 16S rRNA. May interact with the 5'-terminal helix region of 16S rRNA. The sequence is that of Ribosome-binding factor A from Kocuria rhizophila (strain ATCC 9341 / DSM 348 / NBRC 103217 / DC2201).